Consider the following 1035-residue polypeptide: GRB10-interacting GYF protein 1 (1035 aa).

Phosphoserine is present on residues serine 24, serine 28, serine 137, and serine 157. The interval 105–422 is disordered; sequence KGAGPPLAGT…AGPPGDLEDD (318 aa). 2 stretches are compositionally biased toward basic and acidic residues: residues 148 to 179 and 186 to 203; these read SPREIQRSQSWDDRGERRFEKSARRDGARCGF and PRKEHARSDSENWRSLRE. Serine 230 carries the phosphoserine modification. A compositionally biased stretch (basic and acidic residues) spans 239 to 267; the sequence is GWREHGERRRKFEFDLRGDRGGCGEEEGR. Composition is skewed to acidic residues over residues 295–304 and 324–349; these read CLDDEDEEMG and PEEQELDFQGLEEEEEPSEGLEEEGP. A Phosphoserine modification is found at serine 341. Low complexity predominate over residues 367–378; sequence SSPSPLPTLGPL. Positions 388–401 are enriched in basic and acidic residues; that stretch reads TAEKEPPAAEDDIR. Residue serine 406 is modified to Phosphoserine. Low complexity predominate over residues 406-417; that stretch reads SPGVGSSAGPPG. A GYF domain is found at 474–522; that stretch reads ARKWFYKDPQGEIQGPFTTQEMAEWFQAGYFSMSLLVKRGCDEGFQPLG. Phosphoserine occurs at positions 538 and 638. Disordered regions lie at residues 621–640, 696–724, and 825–879; these read PPRGGDQNLLPTMSRSLSVP, KREEEERKRREEKRRQQQQEEQKRRQEEE, and WGGP…RPIR. Over residues 629–639 the composition is skewed to polar residues; it reads LLPTMSRSLSV. Basic and acidic residues predominate over residues 696 to 722; that stretch reads KREEEERKRREEKRRQQQQEEQKRRQE. Residues 857–874 show a composition bias toward low complexity; the sequence is LKNSRSSPSLSDSYSHLS. Serine 862 carries the phosphoserine modification.

It belongs to the GIGYF family. As to quaternary structure, interacts with GRB10. This transient binding is increased under IGF1 stimulation and leads to recruitment of GIGYF1/GRB10 complex to IGF1 receptor. Interacts with DDX6.

Its function is as follows. May act cooperatively with GRB10 to regulate tyrosine kinase receptor signaling. May increase IGF1 receptor phosphorylation under IGF1 stimulation as well as phosphorylation of IRS1 and SHC1. This chain is GRB10-interacting GYF protein 1 (GIGYF1), found in Homo sapiens (Human).